The primary structure comprises 247 residues: Phosphoribosylaminoimidazole-succinocarboxamide synthase (247 aa).

This sequence belongs to the SAICAR synthetase family.

It catalyses the reaction 5-amino-1-(5-phospho-D-ribosyl)imidazole-4-carboxylate + L-aspartate + ATP = (2S)-2-[5-amino-1-(5-phospho-beta-D-ribosyl)imidazole-4-carboxamido]succinate + ADP + phosphate + 2 H(+). The protein operates within purine metabolism; IMP biosynthesis via de novo pathway; 5-amino-1-(5-phospho-D-ribosyl)imidazole-4-carboxamide from 5-amino-1-(5-phospho-D-ribosyl)imidazole-4-carboxylate: step 1/2. In Methanopyrus kandleri (strain AV19 / DSM 6324 / JCM 9639 / NBRC 100938), this protein is Phosphoribosylaminoimidazole-succinocarboxamide synthase.